The primary structure comprises 272 residues: tRNA pseudouridine synthase A (272 aa).

D51 acts as the Nucleophile in catalysis. Residue Y109 participates in substrate binding.

It belongs to the tRNA pseudouridine synthase TruA family. In terms of assembly, homodimer.

It carries out the reaction uridine(38/39/40) in tRNA = pseudouridine(38/39/40) in tRNA. Formation of pseudouridine at positions 38, 39 and 40 in the anticodon stem and loop of transfer RNAs. This chain is tRNA pseudouridine synthase A, found in Verminephrobacter eiseniae (strain EF01-2).